The following is a 39-amino-acid chain: B melanoma antigen 4 (39 aa).

The first 17 residues, 1 to 17, serve as a signal peptide directing secretion; sequence MAAGAVFLALSAQLLQA.

The protein belongs to the BAGE family. Not expressed in normal tissues except in testis. Expressed in melanoma, bladder and lung carcinomas.

The protein localises to the secreted. In terms of biological role, unknown. Candidate gene encoding tumor antigens. This chain is B melanoma antigen 4 (BAGE4), found in Homo sapiens (Human).